Here is a 618-residue protein sequence, read N- to C-terminus: MTKKLPSELKQTRKSIQTACEFCHTKHIQCDVGRPCQNCLKRNIGKFCRDKKRKSRKRIEKHGTQPYLNLGKRLVIHDVPSKTVSPSSVHLQRDFLSSDQEKPGKTPAHNTNIQYTYNINDNFQSAGSIPRITNFNTNNGQTVLENTSNNISASQAVHLMNDPIIPTVRKSTLNLKSHFLEQHKAMQQPLATNCLVATSNVPVHSGMDDSNKSDDDVDDETNIHFDSMWCNDEYMKLKDIVDISTPFLPNNSQIFSLQESEYPNPSASTRGNSSLHLTNLLNSTKSVNDQKDSSIGHSTSTFNTYDEVVSRPFISLDMLHLNRGANANTHPSHNAKLESECDSSSHSDADLEKHDTDFISPSKFRELVKTPQDLYDNKCLIKPHNYKLAYTKLLTTLRKKFLEGAEIDKSASVKDEHSTQKHNLRYDLEVIIRSILERYAPIFISLTSNMIEEDLLLQEVTLQRALLDLENMAKLVSCTPMCIWRRSGEICFVSNEFYSLTGFNKNLLLDRTSFIFEYLDHKSVSNYFQIFNELLAFGYNDINKRKKLLMLNACSSTSSKITEGFSFTTDGKAIFTKCNLLLSNGLYLKCACCWTVKRDSFNIPILVMGQFLPIFEMD.

The segment at residues 20 to 48 (CEFCHTKHIQCDVGRPCQNCLKRNIGKFC) is a DNA-binding region (zn(2)-C6 fungal-type). The disordered stretch occupies residues 325-352 (ANANTHPSHNAKLESECDSSSHSDADLE). The span at 335-352 (AKLESECDSSSHSDADLE) shows a compositional bias: basic and acidic residues. The region spanning 466–538 (LLDLENMAKL…QIFNELLAFG (73 aa)) is the PAS domain.

Belongs to the ERT1/acuK family.

It is found in the nucleus. Functionally, transcription factor which regulates nonfermentable carbon utilization. Binds specifically to 5'-CGGN(8)CGG-3' and 5'-CGGN(9)CGG-3' sequences in the promoter region. In Saccharomyces cerevisiae (strain RM11-1a) (Baker's yeast), this protein is Glucose starvation modulator protein 1 (GSM1).